The chain runs to 517 residues: 2-isopropylmalate synthase (517 aa).

Residues 6–267 enclose the Pyruvate carboxyltransferase domain; it reads IIVFDTTLRD…YTTINTPEIY (262 aa). Asp-15, His-201, His-203, and Asn-237 together coordinate Mn(2+). Residues 393–517 form a regulatory domain region; that stretch reads DLIGLQISDC…RLSKSSEHQV (125 aa).

This sequence belongs to the alpha-IPM synthase/homocitrate synthase family. LeuA type 1 subfamily. Homodimer. Mn(2+) serves as cofactor.

The protein localises to the cytoplasm. It carries out the reaction 3-methyl-2-oxobutanoate + acetyl-CoA + H2O = (2S)-2-isopropylmalate + CoA + H(+). The protein operates within amino-acid biosynthesis; L-leucine biosynthesis; L-leucine from 3-methyl-2-oxobutanoate: step 1/4. Catalyzes the condensation of the acetyl group of acetyl-CoA with 3-methyl-2-oxobutanoate (2-ketoisovalerate) to form 3-carboxy-3-hydroxy-4-methylpentanoate (2-isopropylmalate). The polypeptide is 2-isopropylmalate synthase (Aliarcobacter butzleri (strain RM4018) (Arcobacter butzleri)).